A 344-amino-acid chain; its full sequence is Cytochrome c biogenesis protein CcsA (344 aa).

Helical transmembrane passes span 21-41 (NVAF…AAFP), 45-65 (LLSE…AALL), 80-100 (LYES…LALH), 106-126 (WVGV…ALAL), 151-171 (VMLL…AFLI), 252-272 (LIGL…VWAN), 287-307 (WALI…TKGW), and 313-333 (ALLA…VNFL).

The protein belongs to the CcmF/CycK/Ccl1/NrfE/CcsA family. In terms of assembly, may interact with ccs1.

Its subcellular location is the cellular thylakoid membrane. Functionally, required during biogenesis of c-type cytochromes (cytochrome c6 and cytochrome f) at the step of heme attachment. The chain is Cytochrome c biogenesis protein CcsA from Synechococcus sp. (strain JA-3-3Ab) (Cyanobacteria bacterium Yellowstone A-Prime).